Consider the following 116-residue polypeptide: Iron-sulfur cluster insertion protein ErpA (116 aa).

Positions 44, 108, and 110 each coordinate iron-sulfur cluster.

The protein belongs to the HesB/IscA family. Homodimer. Iron-sulfur cluster is required as a cofactor.

Its function is as follows. Required for insertion of 4Fe-4S clusters for at least IspG. This is Iron-sulfur cluster insertion protein ErpA from Idiomarina loihiensis (strain ATCC BAA-735 / DSM 15497 / L2-TR).